An 88-amino-acid polypeptide reads, in one-letter code: Small ribosomal subunit protein uS17 (88 aa).

This sequence belongs to the universal ribosomal protein uS17 family. In terms of assembly, part of the 30S ribosomal subunit.

Its function is as follows. One of the primary rRNA binding proteins, it binds specifically to the 5'-end of 16S ribosomal RNA. The polypeptide is Small ribosomal subunit protein uS17 (Nitratidesulfovibrio vulgaris (strain ATCC 29579 / DSM 644 / CCUG 34227 / NCIMB 8303 / VKM B-1760 / Hildenborough) (Desulfovibrio vulgaris)).